A 468-amino-acid polypeptide reads, in one-letter code: MTVHPPAVADETSPLLPSQDGPGHNGIVPAATKPKELQSSMSQVALLCCARAIDPLAFFTIFPFVNQMIADTAGIDEADVGFYSGIIESLFSVTQMMLMIPWARAADRMGRKPVLILSLAGLSVSSALFGFSRTLGQMVFFRCLAGTFGGTVVTVRVMISENSTPDTQARAFSYFSLANTIGTVIGPLLGGALCRPGGVFRHYPYALPTVAAGAFGVTVTVACLMFVNETRKPADHTPHETASPTWTSAKILRSQGVLPVLYIHGHSMMLAFAYTAVSPVFYFTSPRLGGYGFSPFYISLFLGGSGIAQTIWLVLVYPPLHKRLGTGNILRGLCFVWIIFLAATVGASVLHRHCEMVAFWILAPLALVLGSSVAMQLTAMQLALDSVSPSPAALGTLNAMSLAIISFLRAVAPAMFTSMYASTLKLSSPGFYTFWLVLGGLVLVLAFTLRWLPEQVEKAPRKLGRSSA.

A disordered region spans residues 1-30 (MTVHPPAVADETSPLLPSQDGPGHNGIVPA). The next 6 membrane-spanning stretches (helical) occupy residues 43–65 (QVAL…FPFV), 80–100 (VGFY…MLMI), 112–132 (KPVL…FGFS), 135–155 (LGQM…VVTV), 174–194 (YFSL…GALC), and 207–227 (LPTV…LMFV). A glycan (N-linked (GlcNAc...) asparagine) is linked at Asn228. Helical transmembrane passes span 257–277 (VLPV…YTAV), 296–316 (FYIS…LVLV), 329–349 (ILRG…GASV), 357–377 (VAFW…AMQL), 387–407 (VSPS…IISF), and 429–449 (PGFY…AFTL).

The protein belongs to the major facilitator superfamily.

It is found in the cell membrane. Its function is as follows. Efflux pump that might be required for efficient secretion of azaphilones. The polypeptide is Efflux pump azaK (Aspergillus niger (strain ATCC 1015 / CBS 113.46 / FGSC A1144 / LSHB Ac4 / NCTC 3858a / NRRL 328 / USDA 3528.7)).